A 275-amino-acid chain; its full sequence is Membrane protein insertase YidC 1 (275 aa).

A signal peptide spans 1–25 (MRKVLRVKKNIKIARIVPLVLLLVA). Cysteine 26 carries N-palmitoyl cysteine lipidation. Residue cysteine 26 is the site of S-diacylglycerol cysteine attachment. 5 helical membrane-spanning segments follow: residues 58–78 (SIGV…MPLF), 129–149 (YASL…FQAL), 171–191 (LYLL…LTNL), 198–216 (VMMT…FMGF), and 222–240 (VVLY…LLLL).

Belongs to the OXA1/ALB3/YidC family. Type 2 subfamily.

It localises to the cell membrane. Its function is as follows. Required for the insertion and/or proper folding and/or complex formation of integral membrane proteins into the membrane. Involved in integration of membrane proteins that insert both dependently and independently of the Sec translocase complex, as well as at least some lipoproteins. This chain is Membrane protein insertase YidC 1, found in Streptococcus pyogenes serotype M6 (strain ATCC BAA-946 / MGAS10394).